The sequence spans 168 residues: HTH-type transcriptional regulator IscR (168 aa).

An HTH rrf2-type domain is found at 2-131; it reads KLTSKGRYAV…NNITLGELMT (130 aa). The segment at residues 28 to 51 is a DNA-binding region (H-T-H motif); it reads LADISERQGISLSYLEQLFSKLRK. Cys92, Cys98, and Cys104 together coordinate [2Fe-2S] cluster.

The cofactor is [2Fe-2S] cluster.

In terms of biological role, regulates the transcription of several operons and genes involved in the biogenesis of Fe-S clusters and Fe-S-containing proteins. The chain is HTH-type transcriptional regulator IscR from Vibrio parahaemolyticus serotype O3:K6 (strain RIMD 2210633).